Here is a 278-residue protein sequence, read N- to C-terminus: Single-strand selective monofunctional uracil-DNA glycosylase (278 aa).

Residues Met-84, Phe-98, and Asn-163 each coordinate substrate. The tract at residues 173-187 (SGRNLTPADLPAKHR) is DNA-binding. Residue His-239 participates in substrate binding.

The protein belongs to the uracil-DNA glycosylase (UDG) superfamily. SMUG1 family.

The protein localises to the nucleus. Functionally, recognizes base lesions in the genome and initiates base excision DNA repair. Acts as a monofunctional DNA glycosylase specific for uracil (U) residues in DNA with a preference for single-stranded DNA substrates. The activity is greater toward mismatches (U/G) compared to matches (U/A). Excises uracil (U), 5-formyluracil (fU) and uracil derivatives bearing an oxidized group at C5 [5-hydroxyuracil (hoU) and 5-hydroxymethyluracil (hmU)] in ssDNA and dsDNA, but not analogous cytosine derivatives (5-hydroxycytosine and 5-formylcytosine), nor other oxidized bases. The activity is damage-specific and salt-dependent. The substrate preference is the following: ssDNA &gt; dsDNA (G pair) = dsDNA (A pair) at low salt concentration, and dsDNA (G pair) &gt; dsDNA (A pair) &gt; ssDNA at high salt concentration. The polypeptide is Single-strand selective monofunctional uracil-DNA glycosylase (Smug1) (Rattus norvegicus (Rat)).